A 177-amino-acid chain; its full sequence is MKRRSYAMLRAAAALAVLVVASPAWAELRGEVVRIIDGDTIDVLVDKQPVRVRLVDIDAPEKRQAFGERARQALAGMVFRRHVLVDEKDTDRYGRTLGTVWVNMELASRPPQPRNVNAAMVHQGMAWAYRFHGRAADPEMLRLEQEARGKRVGLWSDPHAVEPWKWRRESNNRRDEG.

The N-terminal stretch at 1–26 (MKRRSYAMLRAAAALAVLVVASPAWA) is a signal peptide. One can recognise a TNase-like domain in the interval 27–157 (ELRGEVVRII…RGKRVGLWSD (131 aa)). Residues R53, E61, and R95 contribute to the active site.

Monomer. Ca(2+) is required as a cofactor. Post-translationally, the N-terminus is blocked.

The protein resides in the secreted. Its activity is regulated as follows. Endonuclease activity is inhibited by EDTA. Involved in plasmid partition. An endonuclease that acts on supercoiled dsDNA, converting it first to open circular DNA and then linearizing it. Preferentially cleaves regions in dsDNA that are capable of forming ssDNA, such as AT-rich regions and sequences that can form cruciforms. Has poor endonucleolytic activity on linear DNA, has 5'-3' exonuclease activity on dsDNA cleaving generating 3'-phosphonucleotides. This is Protein ParB from Escherichia coli.